The primary structure comprises 515 residues: Ribose import ATP-binding protein RbsA 1 (515 aa).

ABC transporter domains follow at residues 8-244 (FQME…IGRE) and 256-503 (VPAT…LNIH). 40-47 (GENGAGKS) serves as a coordination point for ATP.

The protein belongs to the ABC transporter superfamily. Ribose importer (TC 3.A.1.2.1) family. As to quaternary structure, the complex is composed of an ATP-binding protein (RbsA), two transmembrane proteins (RbsC) and a solute-binding protein (RbsB).

It localises to the cell inner membrane. The enzyme catalyses D-ribose(out) + ATP + H2O = D-ribose(in) + ADP + phosphate + H(+). Functionally, part of the ABC transporter complex RbsABC involved in ribose import. Responsible for energy coupling to the transport system. The chain is Ribose import ATP-binding protein RbsA 1 from Mesorhizobium japonicum (strain LMG 29417 / CECT 9101 / MAFF 303099) (Mesorhizobium loti (strain MAFF 303099)).